The primary structure comprises 179 residues: Nuclear transcription factor Y subunit B (179 aa).

Positions 1-32 (MAEAPASPGGGGGSHESGSPRGGGGGGSVREQ) are disordered. Residues 8–28 (PGGGGGSHESGSPRGGGGGGS) show a composition bias toward gly residues. The DNA-binding element occupies 36–42 (LPIANIS). The interval 63–74 (VQECVSEFISFI) is subunit association domain (SAD). The disordered stretch occupies residues 147–179 (SSSAAEGMGQQGAYNQGMGYMQPQYHNGDISNV).

The protein belongs to the NFYB/HAP3 subunit family. As to quaternary structure, heterotrimeric transcription factor composed of three components, NF-YA, NF-YB and NF-YC. NF-YB and NF-YC must interact and dimerize for NF-YA association and DNA binding.

Its subcellular location is the nucleus. Component of the NF-Y/HAP transcription factor complex. The NF-Y complex stimulates the transcription of various genes by recognizing and binding to a CCAAT motif in promoters. The protein is Nuclear transcription factor Y subunit B (NFY2) of Zea mays (Maize).